The primary structure comprises 24 residues: Humanin-like 11 (24 aa).

Belongs to the humanin family.

The protein localises to the secreted. It localises to the cytoplasm. In terms of biological role, plays a role as a neuroprotective and antiapoptotic factor. This is Humanin-like 11 from Homo sapiens (Human).